Here is a 169-residue protein sequence, read N- to C-terminus: Putative prolyl-tRNA synthetase associated domain-containing protein 1 (169 aa).

The protein belongs to the PRORSD1 family.

The chain is Putative prolyl-tRNA synthetase associated domain-containing protein 1 (PRORSD1P) from Homo sapiens (Human).